Reading from the N-terminus, the 585-residue chain is Cysteine/serine-rich nuclear protein 3 (585 aa).

Disordered stretches follow at residues 1–52 and 335–395; these read MSGI…TPSS and ELDC…GFVE. Residues 30 to 40 are compositionally biased toward low complexity; that stretch reads SSESADSGDSV. Residues 41–52 show a composition bias toward polar residues; it reads NPSTSSHFTPSS. A compositionally biased stretch (acidic residues) spans 335-349; sequence ELDCQGEEEEEEEDG. A compositionally biased stretch (polar residues) spans 351 to 366; that stretch reads SFCSGVTDSSTQSLAP. Residues 368 to 389 show a composition bias toward acidic residues; the sequence is ESDEEEEEEEEEEEEEDDDDDK.

The protein belongs to the AXUD1 family.

The protein resides in the nucleus. In terms of biological role, binds to the consensus sequence 5'-AGAGTG-3' and has transcriptional activator activity. Plays a role in apoptosis. This is Cysteine/serine-rich nuclear protein 3 (CSRNP3) from Homo sapiens (Human).